A 200-amino-acid chain; its full sequence is Inner membrane-spanning protein YciB (200 aa).

The next 6 helical transmembrane spans lie at 7–27, 32–52, 56–76, 93–113, 126–146, and 153–173; these read HPLF…VVNA, FAAT…SYVV, VPLM…LTLV, LFAA…AIMF, ILTF…EIIW, and FWVG…AIAQ.

Belongs to the YciB family.

It localises to the cell inner membrane. Its function is as follows. Plays a role in cell envelope biogenesis, maintenance of cell envelope integrity and membrane homeostasis. The sequence is that of Inner membrane-spanning protein YciB from Bradyrhizobium sp. (strain BTAi1 / ATCC BAA-1182).